Consider the following 494-residue polypeptide: Inositol-trisphosphate 3-kinase homolog (494 aa).

ATP contacts are provided by residues Ser206, Lys218, 260–262 (EDL), and Asp276. Residues Lys278 and 322–329 (KLRYMQFR) contribute to the substrate site. Positions 346 and 426 each coordinate ATP. Lys429 provides a ligand contact to substrate.

It belongs to the inositol phosphokinase (IPK) family. As to expression, expressed in spermatheca.

The enzyme catalyses 1D-myo-inositol 1,4,5-trisphosphate + ATP = 1D-myo-inositol 1,3,4,5-tetrakisphosphate + ADP + H(+). Unlike mammalian IP3K, may not be regulated by calmodulin. In terms of biological role, probably by regulating inositol 1,4,5-trisphosphate levels, negatively regulates posterior body wall muscle contractions required for defecation and let-23 signaling pathway that controls spermathecal dilation and ovulation. May also regulate ovulation downstream of actin cross-linker fln-1. The protein is Inositol-trisphosphate 3-kinase homolog of Caenorhabditis elegans.